A 420-amino-acid polypeptide reads, in one-letter code: Torsin-4A-A (420 aa).

Residues 130–150 form a helical membrane-spanning segment; it reads CLLLFIGIVCFQILNAIENLD. 202–209 contributes to the ATP binding site; sequence GPSGVGKS.

The protein belongs to the ClpA/ClpB family. Torsin subfamily.

It localises to the membrane. In Xenopus laevis (African clawed frog), this protein is Torsin-4A-A (tor4a-a).